The following is a 152-amino-acid chain: Small ribosomal subunit protein uS17A (152 aa).

Belongs to the universal ribosomal protein uS17 family. Component of the small ribosomal subunit (SSU). Mature yeast ribosomes consist of a small (40S) and a large (60S) subunit. The 40S small subunit contains 1 molecule of ribosomal RNA (18S rRNA) and at least 33 different proteins. The large 60S subunit contains 3 rRNA molecules (25S, 5.8S and 5S rRNA) and at least 46 different proteins.

It localises to the cytoplasm. The protein resides in the nucleus. In terms of biological role, component of the ribosome, a large ribonucleoprotein complex responsible for the synthesis of proteins in the cell. The small ribosomal subunit (SSU) binds messenger RNAs (mRNAs) and translates the encoded message by selecting cognate aminoacyl-transfer RNA (tRNA) molecules. The large subunit (LSU) contains the ribosomal catalytic site termed the peptidyl transferase center (PTC), which catalyzes the formation of peptide bonds, thereby polymerizing the amino acids delivered by tRNAs into a polypeptide chain. The nascent polypeptides leave the ribosome through a tunnel in the LSU and interact with protein factors that function in enzymatic processing, targeting, and the membrane insertion of nascent chains at the exit of the ribosomal tunnel. In Schizosaccharomyces pombe (strain 972 / ATCC 24843) (Fission yeast), this protein is Small ribosomal subunit protein uS17A (rps1101).